The sequence spans 328 residues: Global transcription regulator sge1 (328 aa).

Disordered stretches follow at residues 94 to 120 (PGEK…PRQR) and 251 to 293 (QMHQ…QYVH). Low complexity-rich tracts occupy residues 106 to 116 (KSTTQSGGISK), 251 to 261 (QMHQPQVHQPL), and 282 to 293 (AHQPQVHQQYVH).

It belongs to the MIT1/WOR1 family.

It localises to the nucleus. Global transcriptional regulator of transcription that impacts, but is not absolutely required for secondary metabolism and pathogenicity on maize. Regulates synthesis of multiple secondary metabolites, including fumonisins and fusarins. This chain is Global transcription regulator sge1, found in Gibberella moniliformis (strain M3125 / FGSC 7600) (Maize ear and stalk rot fungus).